Consider the following 743-residue polypeptide: Putative pre-mRNA-splicing factor ATP-dependent RNA helicase DHX32 (743 aa).

Met1 carries the post-translational modification N-acetylmethionine. Positions 1–28 are disordered; the sequence is MEEEGLECPNSSSEKRYFPESLDSSDGD. In terms of domain architecture, Helicase ATP-binding spans 72 to 238; it reads MENLLQNQIV…YGNVPVIEVK (167 aa). ATP is bound at residue 85-92; the sequence is GDAKCGKS. A DEAH box motif is present at residues 185-188; the sequence is DDIH.

This sequence belongs to the DEAD box helicase family. DEAH subfamily. Expressed in lymphoid tissues (at protein level). Expressed in brain, heart, skeletal muscle, colon, thymus, spleen, kidney, liver, small intestine, placenta, lung, lymphoid tissues and blood leukocytes.

The protein resides in the nucleus. It localises to the mitochondrion. The catalysed reaction is ATP + H2O = ADP + phosphate + H(+). The polypeptide is Putative pre-mRNA-splicing factor ATP-dependent RNA helicase DHX32 (DHX32) (Homo sapiens (Human)).